The primary structure comprises 227 residues: Ras-related protein Rab-3C (227 aa).

GTP is bound by residues Ser39, Gly42, Lys43, Thr44, Ser45, Thr56, Ser57, Ser61, and Thr62. Thr44 provides a ligand contact to Mg(2+). Residues 53–66 carry the Switch 1 motif; the sequence is DSFTSAFVSTVGID. Positions 62 and 85 each coordinate Mg(2+). Thr86 carries the phosphothreonine modification. The short motif at 86-104 is the Switch 2 element; sequence TAGQERYRTITTAYYRGAM. GTP-binding residues include Gly88, Asn143, Lys144, Asp146, Ala174, and Lys175. A phosphoserine mark is found at Ser196 and Ser198. At Thr206 the chain carries Phosphothreonine. Residues Cys225 and Cys227 are each lipidated (S-geranylgeranyl cysteine). Residue Cys227 is modified to Cysteine methyl ester.

This sequence belongs to the small GTPase superfamily. Rab family. In terms of assembly, interacts with RIMS1, RIMS2, RPH3A and RPH3AL. The GTP-bound form interacts with REP15. Interacts with GDI2, CHM and CHML; phosphorylation at Thr-86 disrupts these interactions. Interacts with MADD (via uDENN domain); the GTP-bound form is preferred for interaction. Mg(2+) serves as cofactor. In terms of processing, phosphorylation of Thr-86 in the switch II region by LRRK2 prevents the association of RAB regulatory proteins, including CHM, CHML and RAB GDP dissociation inhibitor GDI2.

The protein localises to the cell membrane. It carries out the reaction GTP + H2O = GDP + phosphate + H(+). With respect to regulation, regulated by guanine nucleotide exchange factors (GEFs) which promote the exchange of bound GDP for free GTP. Regulated by GTPase activating proteins (GAPs) which increase the GTP hydrolysis activity. Inhibited by GDP dissociation inhibitors (GDIs) which prevent Rab-GDP dissociation. Its function is as follows. The small GTPases Rab are key regulators of intracellular membrane trafficking, from the formation of transport vesicles to their fusion with membranes. Rabs cycle between an inactive GDP-bound form and an active GTP-bound form that is able to recruit to membranes different sets of downstream effectors directly responsible for vesicle formation, movement, tethering and fusion. This chain is Ras-related protein Rab-3C (RAB3C), found in Bos taurus (Bovine).